An 87-amino-acid chain; its full sequence is Small ribosomal subunit protein bS20 (87 aa).

The interval 1–29 (MANTAQARKRARQAVKQNAHNSSQRSTLR) is disordered. Over residues 20-29 (HNSSQRSTLR) the composition is skewed to polar residues.

It belongs to the bacterial ribosomal protein bS20 family.

Functionally, binds directly to 16S ribosomal RNA. The sequence is that of Small ribosomal subunit protein bS20 from Janthinobacterium sp. (strain Marseille) (Minibacterium massiliensis).